A 474-amino-acid chain; its full sequence is tRNA modification GTPase MnmE (474 aa).

Positions 25, 82, and 123 each coordinate (6S)-5-formyl-5,6,7,8-tetrahydrofolate. Residues 219–386 (GIKVVIAGKP…LKKHLYDSAM (168 aa)) enclose the TrmE-type G domain. Asparagine 229 lines the K(+) pocket. GTP is bound by residues 229–234 (NAGKSS), 248–254 (SNISGTT), and 273–276 (DTAG). Serine 233 contacts Mg(2+). K(+) is bound by residues serine 248, isoleucine 250, and threonine 253. Residue threonine 254 participates in Mg(2+) binding. Lysine 474 lines the (6S)-5-formyl-5,6,7,8-tetrahydrofolate pocket.

Belongs to the TRAFAC class TrmE-Era-EngA-EngB-Septin-like GTPase superfamily. TrmE GTPase family. As to quaternary structure, homodimer. Heterotetramer of two MnmE and two MnmG subunits. The cofactor is K(+).

Its subcellular location is the cytoplasm. Exhibits a very high intrinsic GTPase hydrolysis rate. Involved in the addition of a carboxymethylaminomethyl (cmnm) group at the wobble position (U34) of certain tRNAs, forming tRNA-cmnm(5)s(2)U34. The protein is tRNA modification GTPase MnmE of Blochmanniella floridana.